A 211-amino-acid chain; its full sequence is MGKKPVVIGVAGGSGSGKTSVARAIYEHFGDRSILVLEQDFYYKDQSHLPFEERLRTNYDHPLAFDNDLLIEHIHKLLRYEPIEKPVYDYKLHTRSDKVIHVEPKDVIILEGILVLEDERLRNLMDIKVYVDTDADIRIIRRLLRDINERGRTLESVIEQYVSVVRPMHNQFVEPTKRYADIIIPEGGHNHVAIDLMVTKIRTILEQKSFL.

12 to 19 (GGSGSGKT) contacts ATP.

This sequence belongs to the uridine kinase family.

Its subcellular location is the cytoplasm. It carries out the reaction uridine + ATP = UMP + ADP + H(+). The catalysed reaction is cytidine + ATP = CMP + ADP + H(+). The protein operates within pyrimidine metabolism; CTP biosynthesis via salvage pathway; CTP from cytidine: step 1/3. Its pathway is pyrimidine metabolism; UMP biosynthesis via salvage pathway; UMP from uridine: step 1/1. The sequence is that of Uridine kinase from Geobacillus sp. (strain WCH70).